The sequence spans 260 residues: Thiazole synthase (260 aa).

Lys96 (schiff-base intermediate with DXP) is an active-site residue. Residues Gly157, 184 to 185, and 206 to 207 contribute to the 1-deoxy-D-xylulose 5-phosphate site; these read AG and NT.

The protein belongs to the ThiG family. As to quaternary structure, homotetramer. Forms heterodimers with either ThiH or ThiS.

It is found in the cytoplasm. The enzyme catalyses [ThiS sulfur-carrier protein]-C-terminal-Gly-aminoethanethioate + 2-iminoacetate + 1-deoxy-D-xylulose 5-phosphate = [ThiS sulfur-carrier protein]-C-terminal Gly-Gly + 2-[(2R,5Z)-2-carboxy-4-methylthiazol-5(2H)-ylidene]ethyl phosphate + 2 H2O + H(+). It functions in the pathway cofactor biosynthesis; thiamine diphosphate biosynthesis. Catalyzes the rearrangement of 1-deoxy-D-xylulose 5-phosphate (DXP) to produce the thiazole phosphate moiety of thiamine. Sulfur is provided by the thiocarboxylate moiety of the carrier protein ThiS. In vitro, sulfur can be provided by H(2)S. The polypeptide is Thiazole synthase (Rhodopseudomonas palustris (strain TIE-1)).